The primary structure comprises 453 residues: Serine protease HTRA3 (453 aa).

An N-terminal signal peptide occupies residues 1-17 (MQARALLLAALAALALA). The IGFBP N-terminal domain maps to 21-84 (PAAPCPARCD…ECVRGLCRCR (64 aa)). Disulfide bonds link C25-C48, C29-C50, C34-C51, C39-C54, C62-C76, C70-C81, C83-C101, and C90-C126. Residues 64–128 (GPLDSPCGES…RQLQKGACPL (65 aa)) enclose the Kazal-like domain. Residues 175–340 (GSGFIMSEAG…AIPSDRITRF (166 aa)) form a serine protease region. Active-site charge relay system residues include H191, D227, and S305. The region spanning 359–444 (IRMRTITPSL…EVRRGNDDLL (86 aa)) is the PDZ domain.

This sequence belongs to the peptidase S1C family. As to quaternary structure, homotrimer. Interacts with TGFB1; the interaction inhibits TGFB-mediated signaling. Interacts with BMP4; the interaction inhibits BMP4-mediated signaling. Interacts with TGFB2 and GDF5. Interacts with MYH9. In terms of tissue distribution, widely expressed, with highest levels in both adult and fetal heart, ovary, uterus placenta, and bladder. In the endometrium, expressed in epithelial glands and the stroma. Also present in leukocytes. Isoform 1 is predominant in heart and skeletal muscle, whereas isoform 2 is predominant in placenta and kidney.

It localises to the secreted. In terms of biological role, serine protease that cleaves beta-casein/CSN2 as well as several extracellular matrix (ECM) proteoglycans such as decorin/DCN, biglycan/BGN and fibronectin/FN1. Inhibits signaling mediated by TGF-beta family proteins possibly indirectly by degradation of these ECM proteoglycans. May act as a tumor suppressor. Negatively regulates, in vitro, trophoblast invasion during placental development and may be involved in the development of the placenta in vivo. May also have a role in ovarian development, granulosa cell differentiation and luteinization. The sequence is that of Serine protease HTRA3 (HTRA3) from Homo sapiens (Human).